The sequence spans 451 residues: uncharacterized protein (451 aa).

Mn(2+)-binding residues include Asp305, Asp316, His384, Glu414, and Glu428.

It belongs to the peptidase M24B family. Mn(2+) serves as cofactor.

This is an uncharacterized protein from Schizosaccharomyces pombe (strain 972 / ATCC 24843) (Fission yeast).